The sequence spans 345 residues: Tryptophan--tRNA ligase (345 aa).

Residues 22-24 (QPS) and 30-31 (GN) contribute to the ATP site. A 'HIGH' region motif is present at residues 23–31 (PSGELTIGN). Residue D146 coordinates L-tryptophan. Residues 158–160 (GID), V197, and 206–210 (KMSKS) contribute to the ATP site. The 'KMSKS' region signature appears at 206–210 (KMSKS).

It belongs to the class-I aminoacyl-tRNA synthetase family. Homodimer.

The protein resides in the cytoplasm. The catalysed reaction is tRNA(Trp) + L-tryptophan + ATP = L-tryptophyl-tRNA(Trp) + AMP + diphosphate + H(+). In terms of biological role, catalyzes the attachment of tryptophan to tRNA(Trp). The polypeptide is Tryptophan--tRNA ligase (Photorhabdus laumondii subsp. laumondii (strain DSM 15139 / CIP 105565 / TT01) (Photorhabdus luminescens subsp. laumondii)).